We begin with the raw amino-acid sequence, 374 residues long: Type II methyltransferase M.BbvI (374 aa).

An SAM-dependent MTase C5-type domain is found at 3 to 347 (FRKGELFCGP…EAVLKTFARI (345 aa)). Residue cysteine 92 is part of the active site.

It belongs to the class I-like SAM-binding methyltransferase superfamily. C5-methyltransferase family.

It catalyses the reaction a 2'-deoxycytidine in DNA + S-adenosyl-L-methionine = a 5-methyl-2'-deoxycytidine in DNA + S-adenosyl-L-homocysteine + H(+). Its function is as follows. A methylase, recognizes the double-stranded sequence 5'-GCAGC-3', methylates C-2 on both strands, and protects the DNA from cleavage by the BbvI endonuclease. This is Type II methyltransferase M.BbvI (bbvIM) from Brevibacillus brevis (Bacillus brevis).